Here is a 34-residue protein sequence, read N- to C-terminus: Protamine-Z1/Z2 (34 aa).

The segment at Pro1–Arg34 is disordered.

Testis.

The protein resides in the nucleus. The protein localises to the chromosome. Its function is as follows. Protamines substitute for histones in the chromatin of sperm during the haploid phase of spermatogenesis. They compact sperm DNA into a highly condensed, stable and inactive complex. In Thunnus thynnus (Atlantic bluefin tuna), this protein is Protamine-Z1/Z2.